Consider the following 116-residue polypeptide: Large ribosomal subunit protein bL19 (116 aa).

Belongs to the bacterial ribosomal protein bL19 family.

In terms of biological role, this protein is located at the 30S-50S ribosomal subunit interface and may play a role in the structure and function of the aminoacyl-tRNA binding site. This Solidesulfovibrio magneticus (strain ATCC 700980 / DSM 13731 / RS-1) (Desulfovibrio magneticus) protein is Large ribosomal subunit protein bL19.